The primary structure comprises 162 residues: MRIGHGFDVHKFGENGSGPLIIGGVRIPYEKGLLAHSDGDVALHAATDALLGAAALGDIGKLFPDTDPAFKGADSRGLLREAYRRILAKGYKLGNLDITIIAQAPKMAPHIPQMRVNLAEDLQCHMDDINVKATTTEQLGFTGRGEGIACEAVVLLVNVEQG.

A divalent metal cation is bound by residues Asp8 and His10. 4-CDP-2-C-methyl-D-erythritol 2-phosphate contacts are provided by residues 8-10 (DVH) and 36-37 (HS). A divalent metal cation is bound at residue His44. 4-CDP-2-C-methyl-D-erythritol 2-phosphate contacts are provided by residues 58–60 (DIG), 63–67 (FPDTD), 102–108 (AQAPKMA), 134–137 (TTTE), Phe141, and Arg144.

Belongs to the IspF family. As to quaternary structure, homotrimer. A divalent metal cation is required as a cofactor.

The catalysed reaction is 4-CDP-2-C-methyl-D-erythritol 2-phosphate = 2-C-methyl-D-erythritol 2,4-cyclic diphosphate + CMP. The protein operates within isoprenoid biosynthesis; isopentenyl diphosphate biosynthesis via DXP pathway; isopentenyl diphosphate from 1-deoxy-D-xylulose 5-phosphate: step 4/6. Involved in the biosynthesis of isopentenyl diphosphate (IPP) and dimethylallyl diphosphate (DMAPP), two major building blocks of isoprenoid compounds. Catalyzes the conversion of 4-diphosphocytidyl-2-C-methyl-D-erythritol 2-phosphate (CDP-ME2P) to 2-C-methyl-D-erythritol 2,4-cyclodiphosphate (ME-CPP) with a corresponding release of cytidine 5-monophosphate (CMP). This chain is 2-C-methyl-D-erythritol 2,4-cyclodiphosphate synthase, found in Yersinia pseudotuberculosis serotype O:1b (strain IP 31758).